A 520-amino-acid chain; its full sequence is Glutamate decarboxylase-like protein FG08083 (520 aa).

Residue Lys86–Val88 coordinates substrate. Lys300 is modified (N6-(pyridoxal phosphate)lysine). The interval Lys338–Trp357 is disordered. A compositionally biased stretch (polar residues) spans Gly340–Gly351. Arg492 contributes to the substrate binding site.

This sequence belongs to the group II decarboxylase family. Requires pyridoxal 5'-phosphate as cofactor.

Its pathway is mycotoxin biosynthesis. Its function is as follows. Glutamate decarboxylase-like protein; part of the gene cluster that mediates the biosynthesis of butenolide, a mycotoxin that shows antibiotic activity but does not seem to play a major role in the spread of head blight in wheat. Butenolide is derived from glutamic acid via a 4-acetamido-2-butenoic acid intermediate. The predicted function of the NADH:flavin oxidoreductase FG08077, the cytochrome P450 monooxygenase FG08079, the decarboxylase FG08083, and the putative acetyltransferase FG08082 are consistent with this pathway, however, the respective activities of the butelonide biosynthesis cluster enzymes have still to be experimentally determined. This chain is Glutamate decarboxylase-like protein FG08083, found in Gibberella zeae (strain ATCC MYA-4620 / CBS 123657 / FGSC 9075 / NRRL 31084 / PH-1) (Wheat head blight fungus).